A 198-amino-acid polypeptide reads, in one-letter code: Recombination protein RecR (198 aa).

The C4-type zinc-finger motif lies at 57-72 (CSICGNLTDDDPCHIC). Residues 80 to 175 (TTILVVEDAK…KVTRLARGLA (96 aa)) enclose the Toprim domain.

Belongs to the RecR family.

May play a role in DNA repair. It seems to be involved in an RecBC-independent recombinational process of DNA repair. It may act with RecF and RecO. This Streptococcus pyogenes serotype M1 protein is Recombination protein RecR.